Consider the following 500-residue polypeptide: Cobyric acid synthase (500 aa).

A GATase cobBQ-type domain is found at 253–446 (KIGVAAIYFP…FHGFFDRPEV (194 aa)). Cys334 functions as the Nucleophile in the catalytic mechanism. The active site involves His438.

It belongs to the CobB/CobQ family. CobQ subfamily.

It functions in the pathway cofactor biosynthesis; adenosylcobalamin biosynthesis. Functionally, catalyzes amidations at positions B, D, E, and G on adenosylcobyrinic A,C-diamide. NH(2) groups are provided by glutamine, and one molecule of ATP is hydrogenolyzed for each amidation. The chain is Cobyric acid synthase from Chlorobaculum tepidum (strain ATCC 49652 / DSM 12025 / NBRC 103806 / TLS) (Chlorobium tepidum).